Reading from the N-terminus, the 357-residue chain is Phenylalanine--tRNA ligase alpha subunit (357 aa).

Glu259 provides a ligand contact to Mg(2+).

It belongs to the class-II aminoacyl-tRNA synthetase family. Phe-tRNA synthetase alpha subunit type 1 subfamily. As to quaternary structure, tetramer of two alpha and two beta subunits. The cofactor is Mg(2+).

It localises to the cytoplasm. The catalysed reaction is tRNA(Phe) + L-phenylalanine + ATP = L-phenylalanyl-tRNA(Phe) + AMP + diphosphate + H(+). In Jannaschia sp. (strain CCS1), this protein is Phenylalanine--tRNA ligase alpha subunit.